A 256-amino-acid polypeptide reads, in one-letter code: POU domain class 2-associating factor 1 (256 aa).

The tract at residues 1–23 (MLWQKPTAPEQAPAPPRPYQGVR) is disordered. Residues 16–38 (PRPYQGVRVKEPVKELLRRKRGH) form the OCA domain.

This sequence belongs to the POU2AF family. In terms of assembly, interacts with POU2F1/OCT1 and POU2F2/OCT2; the interaction increases POU2F1 and POU2F2 transactivation activity. Ubiquitinated; mediated by SIAH1 or SIAH2 and leading to its subsequent proteasomal degradation.

It is found in the nucleus. In terms of biological role, transcriptional coactivator that specifically associates with either POU2F1/OCT1 or POU2F2/OCT2. It boosts the POU2F1/OCT1 mediated promoter activity and to a lesser extent, that of POU2F2/OCT2. It recognizes the POU domains of POU2F1/OCT1 and POU2F2/OCT2. It is essential for the response of B-cells to antigens and required for the formation of germinal centers. Regulates IL6 expression in B cells as POU2F2/OCT2 coactivator. The sequence is that of POU domain class 2-associating factor 1 (POU2AF1) from Bos taurus (Bovine).